The primary structure comprises 221 residues: Chaperone protein TorD (221 aa).

This sequence belongs to the TorD/DmsD family. TorD subfamily.

It is found in the cytoplasm. Functionally, involved in the biogenesis of TorA. Acts on TorA before the insertion of the molybdenum cofactor and, as a result, probably favors a conformation of the apoenzyme that is competent for acquiring the cofactor. This Psychrobacter sp. (strain PRwf-1) protein is Chaperone protein TorD.